Reading from the N-terminus, the 189-residue chain is Crossover junction endodeoxyribonuclease RuvC (189 aa).

Residues Asp11, Glu71, and Asp143 contribute to the active site. Positions 11, 71, and 143 each coordinate Mg(2+).

Belongs to the RuvC family. Homodimer which binds Holliday junction (HJ) DNA. The HJ becomes 2-fold symmetrical on binding to RuvC with unstacked arms; it has a different conformation from HJ DNA in complex with RuvA. In the full resolvosome a probable DNA-RuvA(4)-RuvB(12)-RuvC(2) complex forms which resolves the HJ. Mg(2+) serves as cofactor.

It is found in the cytoplasm. It catalyses the reaction Endonucleolytic cleavage at a junction such as a reciprocal single-stranded crossover between two homologous DNA duplexes (Holliday junction).. Its function is as follows. The RuvA-RuvB-RuvC complex processes Holliday junction (HJ) DNA during genetic recombination and DNA repair. Endonuclease that resolves HJ intermediates. Cleaves cruciform DNA by making single-stranded nicks across the HJ at symmetrical positions within the homologous arms, yielding a 5'-phosphate and a 3'-hydroxyl group; requires a central core of homology in the junction. The consensus cleavage sequence is 5'-(A/T)TT(C/G)-3'. Cleavage occurs on the 3'-side of the TT dinucleotide at the point of strand exchange. HJ branch migration catalyzed by RuvA-RuvB allows RuvC to scan DNA until it finds its consensus sequence, where it cleaves and resolves the cruciform DNA. In Methylorubrum extorquens (strain CM4 / NCIMB 13688) (Methylobacterium extorquens), this protein is Crossover junction endodeoxyribonuclease RuvC.